A 789-amino-acid chain; its full sequence is Spermatogenesis-associated protein 20 (789 aa).

A compositionally biased stretch (basic residues) spans 1-19 (MSHHSPPPPKHKGEHKGHG). The segment at 1-65 (MSHHSPPPPK…CPPPAPQKTA (65 aa)) is disordered. A phosphoserine mark is found at Ser-5 and Ser-652.

In terms of tissue distribution, testis-specific and age-dependent (at protein level). Highly expressed. Expressed in round spermatids located in the inner half-layer of the seminiferous epithelium as well as in early elongated spermatids having cytoplasmic protrusions into the tubular lumen.

The protein localises to the secreted. In terms of biological role, may play a role in fertility regulation. In Rattus norvegicus (Rat), this protein is Spermatogenesis-associated protein 20 (Spata20).